Consider the following 102-residue polypeptide: 10 kDa heat shock protein, mitochondrial (102 aa).

This sequence belongs to the GroES chaperonin family. As to quaternary structure, homohexamer.

The protein resides in the mitochondrion matrix. Its function is as follows. Eukaryotic CPN10 homolog which is essential for mitochondrial protein biogenesis, together with CPN60. Binds to CPN60 in the presence of Mg-ATP and suppresses the ATPase activity of the latter. This chain is 10 kDa heat shock protein, mitochondrial, found in Schistosoma japonicum (Blood fluke).